Consider the following 122-residue polypeptide: ATP-dependent Clp protease adapter protein ClpS (122 aa).

The protein belongs to the ClpS family. As to quaternary structure, binds to the N-terminal domain of the chaperone ClpA.

In terms of biological role, involved in the modulation of the specificity of the ClpAP-mediated ATP-dependent protein degradation. The protein is ATP-dependent Clp protease adapter protein ClpS of Pseudomonas fluorescens (strain SBW25).